We begin with the raw amino-acid sequence, 92 residues long: Large ribosomal subunit protein eL43 (92 aa).

The C4-type zinc-finger motif lies at 39 to 60 (CSFCGKDSMKRAVVGIWSCKRC).

The protein belongs to the eukaryotic ribosomal protein eL43 family.

This is Large ribosomal subunit protein eL43 (RpL37A) from Drosophila melanogaster (Fruit fly).